Here is a 62-residue protein sequence, read N- to C-terminus: MQKLFIVLLLFCILRLDAEVDGRTMSHCNQSECQEKCKKKNKNGRCITEFEMNYVYNRCRCN.

The first 18 residues, 1-18, serve as a signal peptide directing secretion; that stretch reads MQKLFIVLLLFCILRLDA. 3 disulfide bridges follow: cysteine 28/cysteine 46, cysteine 33/cysteine 59, and cysteine 37/cysteine 61.

This sequence belongs to the short scorpion toxin superfamily. Potassium channel inhibitor family. Alpha-KTx 23 subfamily. As to expression, expressed by the venom gland.

The protein localises to the secreted. May block potassium channels. The polypeptide is Potassium channel toxin alpha-KTx Tx308 (Buthus israelis (Israeli scorpion)).